A 555-amino-acid chain; its full sequence is Hydroxylamine reductase (555 aa).

Positions 5, 8, 17, and 23 each coordinate [4Fe-4S] cluster. Hybrid [4Fe-2O-2S] cluster is bound by residues His248, Glu272, Cys316, Cys408, Cys436, Cys461, Glu496, and Lys498. Cys408 bears the Cysteine persulfide mark.

It belongs to the HCP family. [4Fe-4S] cluster is required as a cofactor. It depends on hybrid [4Fe-2O-2S] cluster as a cofactor.

It is found in the cytoplasm. The catalysed reaction is A + NH4(+) + H2O = hydroxylamine + AH2 + H(+). In terms of biological role, catalyzes the reduction of hydroxylamine to form NH(3) and H(2)O. The protein is Hydroxylamine reductase of Halothermothrix orenii (strain H 168 / OCM 544 / DSM 9562).